A 76-amino-acid polypeptide reads, in one-letter code: Small proline-rich protein 2E (76 aa).

A run of 3 repeats spans residues 21–29 (KKCPEPCPH), 30–38 (PQCPEPCPP), and 39–47 (PKCPEPCPE). The 3 X 9 AA approximate tandem repeats stretch occupies residues 21–47 (KKCPEPCPHPQCPEPCPPPKCPEPCPE). A disordered region spans residues 52–76 (PSYQQKCPPVQPPPPCQQKCPPKSK).

This sequence belongs to the cornifin (SPRR) family. As to expression, expressed in uterus.

The protein resides in the cytoplasm. Its function is as follows. Cross-linked envelope protein of keratinocytes. It is a keratinocyte protein that first appears in the cell cytosol, but ultimately becomes cross-linked to membrane proteins by transglutaminase. All that results in the formation of an insoluble envelope beneath the plasma membrane. The chain is Small proline-rich protein 2E (Sprr2e) from Mus musculus (Mouse).